A 693-amino-acid polypeptide reads, in one-letter code: MARQYPLEKFRNFGIMAHIDAGKTTTSERILFHSGKTHKIGETHDGASVMDWMAQEKERGITITSAATSVTWKDCQLNLIDTPGHVDFTVEVERSLRVLDGAVAVLDAQMGVEPQTETVWRQASRYEVPRIVFVNKMDKTGANFQRSVDSIHSRLGVKSVPIQLPIGAENDFVGIIDLVEMKAYFFDGGENENYETKEIPAEYLEEAKKAHNHMLDEIVTFDEAVMEKYLDGQEISKAEIKSCIRKGVVSSTLFPVLCGTAFKNKGVKPLLDAVVDYLPSPIDVPPAKGYKVGEEVQIPTSDDAPFVGLAFKVATDPFVGRLTFVRVYSGILTSGSYVINTTKDKKERVSRIVKMHAQQRDEINEIRAGDICAIVGLKDTTTGDTIASENQNLTLESMTFAQPVISLAVEPKTKADQEKMGISLSKLAEEDPTFRTYTDEETGQTIIAGMGELHLDILVDRLRREFKVDVNVGAPQVSYRETLKAKADVEGKYIKQSGGRGQYGHVVITFEPNHDKGFEFEDKIVGGKIPKEYIKSVKAGLEAAMNNGPLAGYPMIDIKASLFDGSYHDVDSNEMAYKIAASMALKEAGKRCKPALLEPIMAIEVTVPEQYFGDTMGDISSRRGMIEGTESRDNVQVIKAKVPLSEMFGYATDLRSFTQGRGNYIMQFSHYAEAPKSVVEKVIEDKAKKNKTA.

The 275-residue stretch at 8-282 (EKFRNFGIMA…AVVDYLPSPI (275 aa)) folds into the tr-type G domain. GTP-binding positions include 17 to 24 (AHIDAGKT), 81 to 85 (DTPGH), and 135 to 138 (NKMD).

Belongs to the TRAFAC class translation factor GTPase superfamily. Classic translation factor GTPase family. EF-G/EF-2 subfamily.

The protein localises to the cytoplasm. Functionally, catalyzes the GTP-dependent ribosomal translocation step during translation elongation. During this step, the ribosome changes from the pre-translocational (PRE) to the post-translocational (POST) state as the newly formed A-site-bound peptidyl-tRNA and P-site-bound deacylated tRNA move to the P and E sites, respectively. Catalyzes the coordinated movement of the two tRNA molecules, the mRNA and conformational changes in the ribosome. The sequence is that of Elongation factor G from Mycoplasmoides gallisepticum (strain R(low / passage 15 / clone 2)) (Mycoplasma gallisepticum).